The sequence spans 51 residues: Basic phospholipase A2 homolog BmatTX-I (51 aa).

An intrachain disulfide couples Cys-28 to Cys-44.

In terms of assembly, monomer. As to expression, expressed by the venom gland.

It localises to the secreted. In terms of biological role, snake venom phospholipase A2 homolog that lacks enzymatic activity. Shows high myotoxic activity, neutrophile activation (demonstrated by activation induction of IL-1beta production), slight cytotoxicity against Jurkat (leukemia T) and SK-BR-3 (breast adenocarcinoma) tumor cell lines, and slight antiparasitic activity against promastigote forms of Leishmania amazonensis. A model of myotoxic mechanism has been proposed: an apo Lys49-PLA2 is activated by the entrance of a hydrophobic molecule (e.g. fatty acid) at the hydrophobic channel of the protein leading to a reorientation of a monomer. This reorientation causes a transition between 'inactive' to 'active' states, causing alignment of C-terminal and membrane-docking sites (MDoS) side-by-side and putting the membrane-disruption sites (MDiS) in the same plane, exposed to solvent and in a symmetric position for both monomers. The MDoS region stabilizes the toxin on membrane by the interaction of charged residues with phospholipid head groups. Subsequently, the MDiS region destabilizes the membrane with penetration of hydrophobic residues. This insertion causes a disorganization of the membrane, allowing an uncontrolled influx of ions (i.e. calcium and sodium), and eventually triggering irreversible intracellular alterations and cell death. The sequence is that of Basic phospholipase A2 homolog BmatTX-I from Bothrops mattogrossensis (Pitviper).